The primary structure comprises 250 residues: Uridylate kinase (250 aa).

19-22 (KLSG) contacts ATP. Gly-61 lines the UMP pocket. Residues Gly-62 and Arg-66 each contribute to the ATP site. UMP-binding positions include Asp-81 and 142 to 149 (TGNPFFTT). ATP contacts are provided by Thr-169, Gln-170, Tyr-175, and Asp-178.

It belongs to the UMP kinase family. In terms of assembly, homohexamer.

The protein localises to the cytoplasm. The enzyme catalyses UMP + ATP = UDP + ADP. It participates in pyrimidine metabolism; CTP biosynthesis via de novo pathway; UDP from UMP (UMPK route): step 1/1. Its activity is regulated as follows. Inhibited by UTP. In terms of biological role, catalyzes the reversible phosphorylation of UMP to UDP. The protein is Uridylate kinase of Rhodospirillum rubrum (strain ATCC 11170 / ATH 1.1.1 / DSM 467 / LMG 4362 / NCIMB 8255 / S1).